We begin with the raw amino-acid sequence, 370 residues long: Luciferin sulfotransferase (370 aa).

Position 90-95 (90-95 (KAGTTW)) interacts with 3'-phosphoadenylyl sulfate. Catalysis depends on His165, which acts as the Proton acceptor. Residues Arg189, Ser197, Tyr250, 284 to 289 (LSFESM), and 316 to 320 (FMRSG) each bind 3'-phosphoadenylyl sulfate.

It belongs to the sulfotransferase 1 family.

It carries out the reaction firefly D-luciferin + 3'-phosphoadenylyl sulfate = firefly D-sulfoluciferin + adenosine 3',5'-bisphosphate + H(+). The catalysed reaction is firefly L-luciferin + 3'-phosphoadenylyl sulfate = firefly L-sulfoluciferin + adenosine 3',5'-bisphosphate + H(+). Its activity is regulated as follows. Sulfoluciferin formation is inhibited by the product adenosine 3',5'-bisphosphate. Its function is as follows. Catalyzes the production of firefly sulfoluciferin from luciferin using the sulfo-donor 3'-phosphoadenylyl sulfate (PAPS). Is also able to catalyze the reverse reaction, i.e. the adenosine 3',5'-bisphosphate-dependent desulfonation of sulfoluciferin. Can use either D- or L-luciferin stereoisomer as substrate. Sulfoluciferin, which is not a substrate of P.pyralis luciferase, likely serves as a luciferin storage form in fireflies. The sequence is that of Luciferin sulfotransferase from Photinus pyralis (Common eastern firefly).